The primary structure comprises 294 residues: tRNA dimethylallyltransferase (294 aa).

Residue 10 to 17 coordinates ATP; sequence GITASGKS. 12 to 17 contacts substrate; sequence TASGKS. The segment at 36-39 is interaction with substrate tRNA; it reads DSKQ.

It belongs to the IPP transferase family. In terms of assembly, monomer. Mg(2+) serves as cofactor.

It catalyses the reaction adenosine(37) in tRNA + dimethylallyl diphosphate = N(6)-dimethylallyladenosine(37) in tRNA + diphosphate. Functionally, catalyzes the transfer of a dimethylallyl group onto the adenine at position 37 in tRNAs that read codons beginning with uridine, leading to the formation of N6-(dimethylallyl)adenosine (i(6)A). In Wolbachia sp. subsp. Drosophila simulans (strain wRi), this protein is tRNA dimethylallyltransferase.